We begin with the raw amino-acid sequence, 704 residues long: Polyribonucleotide nucleotidyltransferase (704 aa).

Mg(2+) contacts are provided by D485 and D491. Positions P552–I611 constitute a KH domain. The S1 motif domain occupies G621–R689.

It belongs to the polyribonucleotide nucleotidyltransferase family. In terms of assembly, component of the RNA degradosome, which is a multiprotein complex involved in RNA processing and mRNA degradation. Requires Mg(2+) as cofactor.

The protein localises to the cytoplasm. It carries out the reaction RNA(n+1) + phosphate = RNA(n) + a ribonucleoside 5'-diphosphate. Its function is as follows. Involved in mRNA degradation. Catalyzes the phosphorolysis of single-stranded polyribonucleotides processively in the 3'- to 5'-direction. This Mannheimia succiniciproducens (strain KCTC 0769BP / MBEL55E) protein is Polyribonucleotide nucleotidyltransferase.